The following is a 390-amino-acid chain: Elongation factor Tu 2 (390 aa).

The tr-type G domain maps to 10-201 (KPHVNVGTIG…LDDYVEVPPR (192 aa)). Residues 19–26 (GHVDHGKT) form a G1 region. 19 to 26 (GHVDHGKT) lines the GTP pocket. Residue threonine 26 participates in Mg(2+) binding. The interval 55–59 (GITIA) is G2. The tract at residues 76-79 (DCPG) is G3. GTP contacts are provided by residues 76-80 (DCPGH) and 131-134 (NKAD). Residues 131–134 (NKAD) form a G4 region. The G5 stretch occupies residues 168–170 (SAL).

This sequence belongs to the TRAFAC class translation factor GTPase superfamily. Classic translation factor GTPase family. EF-Tu/EF-1A subfamily. Monomer.

It localises to the cytoplasm. The enzyme catalyses GTP + H2O = GDP + phosphate + H(+). GTP hydrolase that promotes the GTP-dependent binding of aminoacyl-tRNA to the A-site of ribosomes during protein biosynthesis. This is Elongation factor Tu 2 from Wolbachia sp. subsp. Brugia malayi (strain TRS).